Here is a 104-residue protein sequence, read N- to C-terminus: L-rhamnose mutarotase (104 aa).

Position 18 (Tyr-18) interacts with substrate. His-22 acts as the Proton donor in catalysis. Substrate is bound by residues Tyr-41 and 76–77 (WW).

It belongs to the rhamnose mutarotase family. As to quaternary structure, homodimer.

The protein localises to the cytoplasm. It carries out the reaction alpha-L-rhamnose = beta-L-rhamnose. It functions in the pathway carbohydrate metabolism; L-rhamnose metabolism. Functionally, involved in the anomeric conversion of L-rhamnose. This is L-rhamnose mutarotase from Escherichia coli O17:K52:H18 (strain UMN026 / ExPEC).